The sequence spans 1001 residues: Copper-transporting ATPase RAN1 (1001 aa).

Residues 1–21 (MAPSRRDLQLTPVTGGSSSQI) are disordered. The Cytoplasmic portion of the chain corresponds to 1–298 (MAPSRRDLQL…TGEASNMFRR (298 aa)). Positions 11 to 21 (TPVTGGSSSQI) are enriched in polar residues. 2 consecutive HMA domains span residues 56–122 (RKIQ…FEAE) and 133–199 (LVGQ…FEGS). Residues Cys67, Cys70, Cys144, and Cys147 each contribute to the Cu(+) site. The HMA 3; degenerate domain maps to 207–273 (DKLVLRVDGI…GIEEDGFGKF (67 aa)). A helical membrane pass occupies residues 299–320 (FISSLVLSIPLFFIQVICPHIA). The Extracellular segment spans residues 321 to 338 (LFDALLVWRCGPFMMGDW). Residues 339–358 (LKWALVSVIQFVIGKRFYVA) form a helical membrane-spanning segment. The Cytoplasmic segment spans residues 359–365 (AWRALRN). The chain crosses the membrane as a helical span at residues 366 to 386 (GSTNMDVLVALGTSASYFYSV). Over 387–403 (GALLYGAVTGFWSPTYF) the chain is Extracellular. The chain crosses the membrane as a helical span at residues 404 to 424 (DASAMLITFVLLGKYLESLAK). Over 425 to 558 (GKTSDAMKKL…KAPIQKFADY (134 aa)) the chain is Cytoplasmic. A helical transmembrane segment spans residues 559–581 (VASIFVPVVITLALFTLVGWSIG). At 582-602 (GAVGAYPDEWLPENGTHFVFS) the chain is on the extracellular side. Residues 603–620 (LMFSISVVVIACPCALGL) form a helical membrane-spanning segment. Residues 621–931 (ATPTAVMVAT…DLSRKTLTRI (311 aa)) are Cytoplasmic-facing. Asp658 functions as the 4-aspartylphosphate intermediate in the catalytic mechanism. Mg(2+)-binding residues include Asp877 and Asp881. The helical transmembrane segment at 932 to 951 (RLNYVFAMAYNVVSIPIAAG) threads the bilayer. At 952–963 (VFFPVLRVQLPP) the chain is on the extracellular side. Residues 964 to 982 (WAAGACMALSSVSVVCSSL) traverse the membrane as a helical segment. Residues 983 to 1001 (LLRRYKKPRLTTVLKITTE) are Cytoplasmic-facing.

The protein belongs to the cation transport ATPase (P-type) (TC 3.A.3) family. Type IB subfamily.

Its subcellular location is the membrane. It catalyses the reaction Cu(+)(in) + ATP + H2O = Cu(+)(out) + ADP + phosphate + H(+). Its function is as follows. Involved in copper import into the cell. Essential for ethylene signaling, which requires copper. Acts by delivering copper to create functional hormone receptors. The protein is Copper-transporting ATPase RAN1 (RAN1) of Arabidopsis thaliana (Mouse-ear cress).